We begin with the raw amino-acid sequence, 970 residues long: Protein translocase subunit SecA (970 aa).

Residues Gln99, 117-121, and Asp631 each bind ATP; that span reads GEGKT.

The protein belongs to the SecA family. In terms of assembly, monomer and homodimer. Part of the essential Sec protein translocation apparatus which comprises SecA, SecYEG and auxiliary proteins SecDF. Other proteins may also be involved.

It is found in the cell inner membrane. The protein localises to the cytoplasm. The catalysed reaction is ATP + H2O + cellular proteinSide 1 = ADP + phosphate + cellular proteinSide 2.. Part of the Sec protein translocase complex. Interacts with the SecYEG preprotein conducting channel. Has a central role in coupling the hydrolysis of ATP to the transfer of proteins into and across the cell membrane, serving as an ATP-driven molecular motor driving the stepwise translocation of polypeptide chains across the membrane. In Chlamydia caviae (strain ATCC VR-813 / DSM 19441 / 03DC25 / GPIC) (Chlamydophila caviae), this protein is Protein translocase subunit SecA.